The primary structure comprises 243 residues: Calcium-binding protein LPS1-beta (243 aa).

7 EF-hand domains span residues 15 to 49, 47 to 82, 85 to 120, 121 to 156, 157 to 189, 191 to 226, and 227 to 243; these read EVID…DCPE, CPEE…YTKE, YSSD…ISTK, LVEG…KLPL, CFKK…NLPG, YSEE…LSKD, and DIKN…NGKI. D29, N31, D33, T35, E40, D60, N62, D64, R66, E71, D98, D100, N102, R104, E109, D134, D136, D138, H140, E145, D167, N169, D171, S173, E178, D204, N206, D208, R210, and E215 together coordinate Ca(2+).

Aboral ectoderm, a squamous epithelium covering the surface of the late stage embryo and larva.

Calcium-binding protein involved in larval development and metamorphosis. Likely to function as calcium buffers mediating the transport of calcium from the sea water to the blastocoel where calcium is required for skeleton formation. In Lytechinus pictus (Painted sea urchin), this protein is Calcium-binding protein LPS1-beta.